Consider the following 84-residue polypeptide: U21-theraphotoxin-Cg1a 3 (84 aa).

The N-terminal stretch at M1–A21 is a signal peptide. Residues E22 to R47 constitute a propeptide that is removed on maturation. Cystine bridges form between C49–C63, C56–C68, and C62–C76. V82 carries the valine amide modification.

It belongs to the neurotoxin 10 (Hwtx-1) family. 05 (F4a) subfamily. Expressed by the venom gland.

It localises to the secreted. Probable ion channel inhibitor. The chain is U21-theraphotoxin-Cg1a 3 from Chilobrachys guangxiensis (Chinese earth tiger tarantula).